Reading from the N-terminus, the 211-residue chain is Ferric nitrobindin-like protein (211 aa).

The GXWXGXG motif lies at 21 to 27 (GRWRGPG). The tract at residues 104-130 (GVVQEGSDTRTEPGGAEPDPAGRRAPS) is disordered.

This sequence belongs to the nitrobindin family.

The protein is Ferric nitrobindin-like protein of Beutenbergia cavernae (strain ATCC BAA-8 / DSM 12333 / CCUG 43141 / JCM 11478 / NBRC 16432 / NCIMB 13614 / HKI 0122).